The primary structure comprises 483 residues: Phosphomethylpyrimidine synthase (483 aa).

Residues asparagine 97, methionine 126, tyrosine 156, histidine 192, 212-214, 253-256, and glutamate 292 contribute to the substrate site; these read SRG and DSLR. Histidine 296 provides a ligand contact to Zn(2+). Tyrosine 319 contributes to the substrate binding site. Histidine 360 is a binding site for Zn(2+). Residues cysteine 440, cysteine 443, and cysteine 448 each coordinate [4Fe-4S] cluster.

It belongs to the ThiC family. The cofactor is [4Fe-4S] cluster.

It carries out the reaction 5-amino-1-(5-phospho-beta-D-ribosyl)imidazole + S-adenosyl-L-methionine = 4-amino-2-methyl-5-(phosphooxymethyl)pyrimidine + CO + 5'-deoxyadenosine + formate + L-methionine + 3 H(+). It participates in cofactor biosynthesis; thiamine diphosphate biosynthesis. Its function is as follows. Catalyzes the synthesis of the hydroxymethylpyrimidine phosphate (HMP-P) moiety of thiamine from aminoimidazole ribotide (AIR) in a radical S-adenosyl-L-methionine (SAM)-dependent reaction. The sequence is that of Phosphomethylpyrimidine synthase from Parasynechococcus marenigrum (strain WH8102).